A 289-amino-acid chain; its full sequence is 4-hydroxy-tetrahydrodipicolinate synthase (289 aa).

A pyruvate-binding site is contributed by Thr43. Tyr131 (proton donor/acceptor) is an active-site residue. Residue Lys160 is the Schiff-base intermediate with substrate of the active site. Residue Val200 participates in pyruvate binding.

It belongs to the DapA family. As to quaternary structure, homotetramer; dimer of dimers.

The protein localises to the cytoplasm. The catalysed reaction is L-aspartate 4-semialdehyde + pyruvate = (2S,4S)-4-hydroxy-2,3,4,5-tetrahydrodipicolinate + H2O + H(+). The protein operates within amino-acid biosynthesis; L-lysine biosynthesis via DAP pathway; (S)-tetrahydrodipicolinate from L-aspartate: step 3/4. Catalyzes the condensation of (S)-aspartate-beta-semialdehyde [(S)-ASA] and pyruvate to 4-hydroxy-tetrahydrodipicolinate (HTPA). This Methanococcus maripaludis (strain C6 / ATCC BAA-1332) protein is 4-hydroxy-tetrahydrodipicolinate synthase.